The following is a 216-amino-acid chain: Pyridoxine/pyridoxamine 5'-phosphate oxidase (216 aa).

Residues 9 to 12 and Arg67 each bind substrate; that span reads RLSY. FMN is bound by residues 62–67, 77–78, Lys84, and Gln106; these read RIVLLR and YT. Residues Tyr124, Arg128, and Ser132 each coordinate substrate. FMN-binding positions include 142–143 and Trp188; that span reads QS. 194–196 contacts substrate; the sequence is RMH. Position 198 (Arg198) interacts with FMN.

The protein belongs to the pyridoxamine 5'-phosphate oxidase family. Homodimer. Requires FMN as cofactor.

The enzyme catalyses pyridoxamine 5'-phosphate + O2 + H2O = pyridoxal 5'-phosphate + H2O2 + NH4(+). It catalyses the reaction pyridoxine 5'-phosphate + O2 = pyridoxal 5'-phosphate + H2O2. The protein operates within cofactor metabolism; pyridoxal 5'-phosphate salvage; pyridoxal 5'-phosphate from pyridoxamine 5'-phosphate: step 1/1. It functions in the pathway cofactor metabolism; pyridoxal 5'-phosphate salvage; pyridoxal 5'-phosphate from pyridoxine 5'-phosphate: step 1/1. Catalyzes the oxidation of either pyridoxine 5'-phosphate (PNP) or pyridoxamine 5'-phosphate (PMP) into pyridoxal 5'-phosphate (PLP). This Psychrobacter cryohalolentis (strain ATCC BAA-1226 / DSM 17306 / VKM B-2378 / K5) protein is Pyridoxine/pyridoxamine 5'-phosphate oxidase.